Here is a 369-residue protein sequence, read N- to C-terminus: Nuclear pore complex-interacting protein family member A6 (369 aa).

The interval 151–170 (SMKEREHGEKERQVSEAEEN) is disordered.

Belongs to the NPIP family.

This chain is Nuclear pore complex-interacting protein family member A6, found in Homo sapiens (Human).